We begin with the raw amino-acid sequence, 223 residues long: Protein phosphatase 1 regulatory subunit 3C (223 aa).

The CBM21 domain occupies 104–209 (REQLTRKLVC…NNDGKNYSLH (106 aa)).

As to quaternary structure, interacts with PPP1CC catalytic subunit of PP1 and associates with glycogen. Forms complexes with glycogen phosphorylase, glycogen synthase and phosphorylase kinase which is necessary for its regulation of PP1 activity.

In terms of biological role, acts as a glycogen-targeting subunit for PP1 and regulates its activity. Activates glycogen synthase, reduces glycogen phosphorylase activity and limits glycogen breakdown. The sequence is that of Protein phosphatase 1 regulatory subunit 3C from Xenopus tropicalis (Western clawed frog).